Reading from the N-terminus, the 755-residue chain is 3-isopropylmalate dehydratase (755 aa).

Residues Cys353, Cys413, and Cys416 each contribute to the [4Fe-4S] cluster site. 3 disordered regions span residues 427-446, 471-493, and 510-529; these read GERCASTSNRNFEGRQGAGG, LTPAQQDRPASPTPKKIETELEP, and DAPATGASPPSPAPSDAAGM. The segment covering 510-528 has biased composition (low complexity); that stretch reads DAPATGASPPSPAPSDAAG.

This sequence belongs to the aconitase/IPM isomerase family. In terms of assembly, monomer. It depends on [4Fe-4S] cluster as a cofactor.

It carries out the reaction (2R,3S)-3-isopropylmalate = (2S)-2-isopropylmalate. It functions in the pathway amino-acid biosynthesis; L-leucine biosynthesis; L-leucine from 3-methyl-2-oxobutanoate: step 2/4. Catalyzes the isomerization between 2-isopropylmalate and 3-isopropylmalate, via the formation of 2-isopropylmaleate. The polypeptide is 3-isopropylmalate dehydratase (LEUA) (Rhizomucor pusillus).